Consider the following 208-residue polypeptide: Large ribosomal subunit protein uL3 (208 aa).

Residues 116–148 are disordered; it reads GFQGVIKRHGQSRGPMAHGSRYHRRPGSMGPVA.

It belongs to the universal ribosomal protein uL3 family. In terms of assembly, part of the 50S ribosomal subunit. Forms a cluster with proteins L14 and L19.

One of the primary rRNA binding proteins, it binds directly near the 3'-end of the 23S rRNA, where it nucleates assembly of the 50S subunit. The chain is Large ribosomal subunit protein uL3 from Streptococcus pyogenes serotype M6 (strain ATCC BAA-946 / MGAS10394).